A 639-amino-acid chain; its full sequence is Developmental regulatory protein wetA (639 aa).

4 disordered regions span residues 65–97 (MDPS…EFDF), 206–369 (TTMR…SAAS), 418–552 (GLLI…SADE), and 587–613 (LMTG…RRRR). The span at 69–78 (HHHHHPHHHA) shows a compositional bias: basic residues. 2 stretches are compositionally biased toward polar residues: residues 81-90 (ESSTTSSGVS) and 214-226 (VSQT…SPSM). Residues 246 to 255 (RGRRAHRAHT) show a composition bias toward basic residues. 3 stretches are compositionally biased toward low complexity: residues 256–275 (QHAL…QAHQ), 346–369 (QQQW…SAAS), and 506–526 (HSSG…RVSV).

The protein belongs to the wetA family.

BrlA, abaA and wetA are pivotal regulators of conidiophore development and conidium maturation. They act individually and together to regulate their own expression and that of numerous other sporulation-specific genes. Acts as a crucial regulator of both conidiation capacity and conidial quality. Plays a role in virulence. In Beauveria bassiana (strain ARSEF 2860) (White muscardine disease fungus), this protein is Developmental regulatory protein wetA.